A 277-amino-acid chain; its full sequence is 2-dehydro-3-deoxyphosphooctonate aldolase (277 aa).

This sequence belongs to the KdsA family.

The protein localises to the cytoplasm. It catalyses the reaction D-arabinose 5-phosphate + phosphoenolpyruvate + H2O = 3-deoxy-alpha-D-manno-2-octulosonate-8-phosphate + phosphate. It participates in carbohydrate biosynthesis; 3-deoxy-D-manno-octulosonate biosynthesis; 3-deoxy-D-manno-octulosonate from D-ribulose 5-phosphate: step 2/3. Its pathway is bacterial outer membrane biogenesis; lipopolysaccharide biosynthesis. The protein is 2-dehydro-3-deoxyphosphooctonate aldolase of Vesicomyosocius okutanii subsp. Calyptogena okutanii (strain HA).